The chain runs to 400 residues: Large envelope protein (400 aa).

The residue at position 1 (Met1) is an N-acetylmethionine. A lipid anchor (N-myristoyl glycine; by host) is attached at Gly2. The segment at 2-119 is pre-S1; the sequence is GAPLSTTRRG…PPLRDTHPQA (118 aa). The tract at residues 2 to 174 is pre-S; that stretch reads GAPLSTTRRG…FLKTGGPATN (173 aa). Residues 2 to 181 lie on the Virion surface; in external conformation side of the membrane; that stretch reads GAPLSTTRRG…ATNMDNITSG (180 aa). At 2-253 the chain is on the intravirion; in internal conformation side; sequence GAPLSTTRRG…PGYRWMCLRR (252 aa). The N-linked (GlcNAc...) asparagine glycan is linked to Pro4. Residues 84–114 are disordered; that stretch reads VLTTLPADPPPASTNRRSGRKPTPVSPPLRD. The segment at 120 to 174 is pre-S2; the sequence is MQWNSTQFHQALLDPRVRALYFPAGGSSSETQNPAPTIASLTSSIFLKTGGPATN. A helical transmembrane segment spans residues 182–202; the sequence is LLGPLLVLQAVCFLLTKILTI. Residues 203–253 are Intravirion; in external conformation-facing; it reads PQSLDSWWTSLNFLGGTPGCPGQNSQSPTSNHLPTSCPPTCPGYRWMCLRR. A helical membrane pass occupies residues 254-274; sequence FIIFLFILLLCLIFLLVLVDY. Over 275 to 348 the chain is Virion surface; that stretch reads QGMLPVCPPL…WASARFSWLS (74 aa). Asn320 carries N-linked (GlcNAc...) asparagine; by host glycosylation. Residues 349 to 369 form a helical membrane-spanning segment; sequence LLVQFVQWCVGLSPTVWLLVI. Residues 370 to 375 are Intravirion-facing; sequence WMIWYW. A helical transmembrane segment spans residues 376-398; it reads GPNLCSILSPFIPLLPIFCYLWV. Residues 399-400 lie on the Virion surface side of the membrane; it reads SI.

It belongs to the orthohepadnavirus major surface antigen family. In its internal form (Li-HBsAg), interacts with the capsid protein and with the isoform S. Interacts with host chaperone CANX. As to quaternary structure, associates with host chaperone CANX through its pre-S2 N glycan; this association may be essential for isoform M proper secretion. In terms of assembly, interacts with isoform L. Interacts with the antigens of satellite virus HDV (HDVAgs); this interaction is required for encapsidation of HDV genomic RNA. In terms of processing, isoform M is N-terminally acetylated by host at a ratio of 90%, and N-glycosylated by host at the pre-S2 region. Myristoylated.

The protein localises to the virion membrane. Functionally, the large envelope protein exists in two topological conformations, one which is termed 'external' or Le-HBsAg and the other 'internal' or Li-HBsAg. In its external conformation the protein attaches the virus to cell receptors and thereby initiating infection. This interaction determines the species specificity and liver tropism. This attachment induces virion internalization predominantly through caveolin-mediated endocytosis. The large envelope protein also assures fusion between virion membrane and endosomal membrane. In its internal conformation the protein plays a role in virion morphogenesis and mediates the contact with the nucleocapsid like a matrix protein. The middle envelope protein plays an important role in the budding of the virion. It is involved in the induction of budding in a nucleocapsid independent way. In this process the majority of envelope proteins bud to form subviral lipoprotein particles of 22 nm of diameter that do not contain a nucleocapsid. The chain is Large envelope protein from Homo sapiens (Human).